The following is a 1012-amino-acid chain: Probable inorganic carbon transporter subunit DabA (1012 aa).

Residues Cys-489, Asp-491, His-679, and Cys-694 each contribute to the Zn(2+) site.

Belongs to the inorganic carbon transporter (TC 9.A.2) DabA family. In terms of assembly, forms a complex with DabB. Requires Zn(2+) as cofactor.

It is found in the cell inner membrane. Its function is as follows. Part of an energy-coupled inorganic carbon pump. The sequence is that of Probable inorganic carbon transporter subunit DabA from Dechloromonas aromatica (strain RCB).